Consider the following 144-residue polypeptide: PE family protein PE9 (144 aa).

The PE domain occupies 1–87 (MSYMIATPAA…RTLTGGCGVF (87 aa)). A disordered region spans residues 98-124 (AAEHRAAGAGRRQRRRRSGDGQWRLRQ).

This sequence belongs to the mycobacterial PE family. Forms a complex with PE10. The complex interacts with human TLR4.

It is found in the secreted. Its subcellular location is the cell wall. It localises to the cell surface. Together with PE10, induces macrophage apoptosis through human Toll-like receptor 4 (TLR4) signaling pathway. Interaction with TLR4 leads to increased levels of phospho-IRF-3, increase in the transcript levels of IFN-beta and pro-apoptotic genes, up-regulation of IL-10, down-regulation of IL-1b and enhanced levels of macrophage apoptosis. The chain is PE family protein PE9 from Mycobacterium tuberculosis (strain ATCC 25618 / H37Rv).